Reading from the N-terminus, the 382-residue chain is Flap endonuclease 1-B (382 aa).

Residues 1–104 (MGIHGLAKLI…GELAKRSERR (104 aa)) form an N-domain region. Aspartate 34 provides a ligand contact to Mg(2+). DNA-binding residues include arginine 47 and arginine 70. 5 residues coordinate Mg(2+): aspartate 86, glutamate 158, glutamate 160, aspartate 179, and aspartate 181. Residues 122–253 (NIEKFNKRLV…KRAIDLIRQH (132 aa)) are I-domain. Residue glutamate 158 coordinates DNA. Glycine 231 and aspartate 233 together coordinate DNA. A Mg(2+)-binding site is contributed by aspartate 233. Residues 336–344 (TQGRLDDFF) form an interaction with PCNA region. Residues 352–382 (STKRKEVESKGSTKKKSKTGGTPAGKFKRGK) are disordered.

This sequence belongs to the XPG/RAD2 endonuclease family. FEN1 subfamily. Interacts with PCNA. Three molecules of fen1 bind to one PCNA trimer with each molecule binding to one PCNA monomer. PCNA stimulates the nuclease activity without altering cleavage specificity. It depends on Mg(2+) as a cofactor. In terms of processing, phosphorylated. Phosphorylation upon DNA damage induces relocalization to the nuclear plasma.

It is found in the nucleus. It localises to the nucleolus. The protein resides in the nucleoplasm. The protein localises to the mitochondrion. Its function is as follows. Structure-specific nuclease with 5'-flap endonuclease and 5'-3' exonuclease activities involved in DNA replication and repair. During DNA replication, cleaves the 5'-overhanging flap structure that is generated by displacement synthesis when DNA polymerase encounters the 5'-end of a downstream Okazaki fragment. It enters the flap from the 5'-end and then tracks to cleave the flap base, leaving a nick for ligation. Also involved in the long patch base excision repair (LP-BER) pathway, by cleaving within the apurinic/apyrimidinic (AP) site-terminated flap. Acts as a genome stabilization factor that prevents flaps from equilibrating into structures that lead to duplications and deletions. Also possesses 5'-3' exonuclease activity on nicked or gapped double-stranded DNA, and exhibits RNase H activity. Also involved in replication and repair of rDNA and in repairing mitochondrial DNA. This Xenopus laevis (African clawed frog) protein is Flap endonuclease 1-B (fen1-b).